A 384-amino-acid chain; its full sequence is Trophoblast glycoprotein-like (384 aa).

Residues 1–30 (MAPRAGQRGLWSPLPGLLLLAAALSRPAAP) form the signal peptide. 2 disulfides stabilise this stretch: Cys31-Cys37 and Cys35-Cys47. Residues 31–309 (CPFQCYCFGS…DVAGPELEAS (279 aa)) lie on the Extracellular side of the membrane. LRR repeat units lie at residues 61–84 (PPDA…AFAG), 95–118 (LPLL…AFDG), 119–142 (LPSL…AFRG), 173–196 (LAEL…ALRL), and 198–219 (RLEQ…ELSA). N-linked (GlcNAc...) asparagine glycosylation occurs at Asn66. 2 cysteine pairs are disulfide-bonded: Cys240–Cys266 and Cys242–Cys287. A helical membrane pass occupies residues 310 to 330 (YVFFGLVLALIGLIFLMVLYL). Topologically, residues 331 to 384 (NRRGIQRWMHNLREACRDQMEGYHYRYEQDADPRRAPAPAAPAGSRATSPGSGL) are cytoplasmic. The disordered stretch occupies residues 361 to 384 (ADPRRAPAPAAPAGSRATSPGSGL). Positions 367-384 (PAPAAPAGSRATSPGSGL) are enriched in low complexity.

The protein resides in the membrane. This is Trophoblast glycoprotein-like (Tpbgl) from Mus musculus (Mouse).